The following is a 181-amino-acid chain: Oligoribonuclease (181 aa).

The 164-residue stretch at 8–171 (LIWLDMEMTG…ADILESIEEM (164 aa)) folds into the Exonuclease domain. The active site involves Tyr-129.

Belongs to the oligoribonuclease family.

It is found in the cytoplasm. Functionally, 3'-to-5' exoribonuclease specific for small oligoribonucleotides. This chain is Oligoribonuclease, found in Chromobacterium violaceum (strain ATCC 12472 / DSM 30191 / JCM 1249 / CCUG 213 / NBRC 12614 / NCIMB 9131 / NCTC 9757 / MK).